A 522-amino-acid polypeptide reads, in one-letter code: Transactivator/viroplasmin protein (522 aa).

Residues K487–G500 are compositionally biased toward basic and acidic residues. The disordered stretch occupies residues K487 to D522.

This sequence belongs to the caulimoviridae viroplasmin family.

Its subcellular location is the host cytoplasm. Its function is as follows. Enhances the ribosomal termination-reinitiation event leading to the translation of major open reading frames on the polycistronic viral RNAs. In Arabidopsis thaliana (Mouse-ear cress), this protein is Transactivator/viroplasmin protein.